The primary structure comprises 371 residues: MRKTLFSGVALAAVIAFGGSAWADVLVGIGIPVTGPNAVYGAQIQKGAEAAIKEVNDAGGINGEKIAITIGDDVSDPKQGISVANKFAADGVKFVIGHFNSGVTIPASQVYAENGILEISPGATNPQYTEQGLWNTFRTCGRDDQQGTVAGQYIFDHFKDAKIAVVHDKTPYGQGLADETKKKLNELGTKETLYEGVNVGEKDFSALIAKLKQAGVNVVYWGGLHPEAGLIIRQMADQGLKAQFISGDGIVSNELASIAGPAVEGTLNTFGPDPRNNPDNAELVKKFRDAGFEPEAYTLYSYAAVQSLAQAAKAAGSNDPQEVAKAMKEKGPFKTVLGDLSYDEKGDPKLPGYVMYKWEKGADGKYNYIQQ.

A signal peptide spans 1–23 (MRKTLFSGVALAAVIAFGGSAWA).

It belongs to the leucine-binding protein family.

Functionally, component of an amino-acid transport system. This chain is Leu/Ile/Val-binding protein homolog 1, found in Brucella melitensis biotype 1 (strain ATCC 23456 / CCUG 17765 / NCTC 10094 / 16M).